The chain runs to 1258 residues: Cohesin subunit SA-1 (1258 aa).

The tract at residues 1 to 84 (MITSELPVLQ…HPQQNGEGEP (84 aa)) is disordered. The segment covering 10 to 19 (QDSTNETTAH) has biased composition (polar residues). At Ser-24 the chain carries Phosphoserine. Residues 53 to 62 (SPGEKSRIEA) show a composition bias toward basic and acidic residues. One can recognise an SCD domain in the interval 296–381 (FVHRYRDAIA…NRFKDRIVSM (86 aa)). Phosphoserine occurs at positions 756, 1062, and 1065. 2 disordered regions span residues 1055–1096 (GGED…SLDN) and 1129–1148 (MGDQIQEPESEHGSEPDFLH). The segment covering 1062 to 1074 (SVNSGSSSSKTSS) has biased composition (low complexity). Residues 1076-1087 (RNKKGRPPLHKK) show a composition bias toward basic residues. Ser-1093 carries the phosphoserine modification. The span at 1137 to 1146 (ESEHGSEPDF) shows a compositional bias: basic and acidic residues. Lys-1161 participates in a covalent cross-link: Glycyl lysine isopeptide (Lys-Gly) (interchain with G-Cter in SUMO2).

This sequence belongs to the SCC3 family. Cohesin complexes are composed of a heterodimer between a SMC1 protein (SMC1A or SMC1B) and SMC3, which are attached via their hinge domain, and RAD21 which link them at their heads, and one STAG protein (STAG1, STAG2 or STAG3). In cohesin complexes, STAG1 is mutually exclusive with STAG2 and STAG3. Interacts directly with RAD21 in cohesin complex. The cohesin complex interacts with the cohesin loading complex subunits NIPBL/Scc2 (via HEAT repeats) and MAU2/Scc4. NIPBL directly contacts all members of the complex, RAD21, SMC1A/B, SMC3 and STAG1. Phosphorylated by PLK1. The large dissociation of cohesin from chromosome arms during prophase is partly due to its phosphorylation.

It localises to the nucleus. The protein localises to the chromosome. Its subcellular location is the centromere. Its function is as follows. Component of cohesin complex, a complex required for the cohesion of sister chromatids after DNA replication. The cohesin complex apparently forms a large proteinaceous ring within which sister chromatids can be trapped. At anaphase, the complex is cleaved and dissociates from chromatin, allowing sister chromatids to segregate. The cohesin complex may also play a role in spindle pole assembly during mitosis. The chain is Cohesin subunit SA-1 (STAG1) from Homo sapiens (Human).